The sequence spans 1060 residues: DNA-directed RNA polymerase subunit beta (1060 aa).

This sequence belongs to the RNA polymerase beta chain family. In terms of assembly, in plastids the minimal PEP RNA polymerase catalytic core is composed of four subunits: alpha, beta, beta', and beta''. When a (nuclear-encoded) sigma factor is associated with the core the holoenzyme is formed, which can initiate transcription.

The protein resides in the plastid. Its subcellular location is the chloroplast. It catalyses the reaction RNA(n) + a ribonucleoside 5'-triphosphate = RNA(n+1) + diphosphate. Its function is as follows. DNA-dependent RNA polymerase catalyzes the transcription of DNA into RNA using the four ribonucleoside triphosphates as substrates. This chain is DNA-directed RNA polymerase subunit beta, found in Calycanthus floridus var. glaucus (Eastern sweetshrub).